The primary structure comprises 252 residues: MATVTTQASAAIFGPCGLKSRFLGGSSGKLNRGVAFRPVGCSPSASFKVEAKKGEWLPGLASPGYLTGSLPGDNGFDPLGLAEDPENLRWFVQAELVNGRWAMLGVAGMLLPEVFTSIGIINVPKWYAAGKEEYFASSSTLFVIEFILSHYVEIRRWQDIKNPGSVNQDPIFKQYSLPAGEVGYPGGIFNPLNFAPTLEAKEKEIANGRLAMLAFLGFIIQHNVTGKGPFDNLLQHISDPWHNTIVQTLGGN.

Residue Trp56 participates in chlorophyll b binding. The chlorophyll a site is built by Phe76 and Glu95. Arg100 contributes to the chlorophyll b binding site. 2 consecutive transmembrane segments (helical) span residues 101 to 121 (WAML…IGII) and 134 to 154 (YFAS…YVEI). Residues Ser137, Val143, Glu153, and Arg156 each coordinate chlorophyll b. Positions 203, 204, 207, 209, 221, and 236 each coordinate chlorophyll a.

The protein belongs to the light-harvesting chlorophyll a/b-binding (LHC) protein family. As to quaternary structure, the LHC complex consists of chlorophyll a-b binding proteins. It depends on Binds at least 14 chlorophylls (8 Chl-a and 6 Chl-b) and carotenoids such as lutein and neoxanthin. as a cofactor. In terms of processing, photoregulated by reversible phosphorylation of its threonine residues.

The protein resides in the plastid. It is found in the chloroplast thylakoid membrane. The light-harvesting complex (LHC) functions as a light receptor, it captures and delivers excitation energy to photosystems with which it is closely associated. Its function is as follows. May channel protons produced in the catalytic Mn center of water oxidation into the thylakoid lumen. The sequence is that of Chlorophyll a-b binding protein P4, chloroplastic from Pisum sativum (Garden pea).